The sequence spans 219 residues: Protein-L-isoaspartate O-methyltransferase (219 aa).

Residue Ser64 is part of the active site.

The protein belongs to the methyltransferase superfamily. L-isoaspartyl/D-aspartyl protein methyltransferase family.

The protein resides in the cytoplasm. It carries out the reaction [protein]-L-isoaspartate + S-adenosyl-L-methionine = [protein]-L-isoaspartate alpha-methyl ester + S-adenosyl-L-homocysteine. In terms of biological role, catalyzes the methyl esterification of L-isoaspartyl residues in peptides and proteins that result from spontaneous decomposition of normal L-aspartyl and L-asparaginyl residues. It plays a role in the repair and/or degradation of damaged proteins. The sequence is that of Protein-L-isoaspartate O-methyltransferase from Chlorobaculum parvum (strain DSM 263 / NCIMB 8327) (Chlorobium vibrioforme subsp. thiosulfatophilum).